The following is a 301-amino-acid chain: MVQQQQQQQQIKKNQVKPPLYSNLIAGAIAGVIGSSVVFPLDFVKTRLQQQRVSIDGSKQYNGIIDCFKKVIKNEGGVRGLYRGLSSNLIGIIPEKALKLAMNDYFRTRFQGDRSYIKLWEEVASGGLAGMCQVVATNPMELVKIRMQVSGLSGKKASLKEVVSELGIKGLYKGTASTLLRDVPFSMIYFSIYGRMKHNLTDQETGEIGLPKILLCGITAGSIAASVSTPFDVIKTRIQVKPGPNDPHYKGIADCFRKTIQSEGPKALFKGVLPRVCIISPLFGITLVVYEIQKSFYASTH.

Residues 1-23 (MVQQQQQQQQIKKNQVKPPLYSN) lie on the Mitochondrial intermembrane side of the membrane. 3 Solcar repeats span residues 18-109 (PPLY…FRTR), 117-199 (IKLW…MKHN), and 208-296 (IGLP…QKSF). The chain crosses the membrane as a helical span at residues 24 to 44 (LIAGAIAGVIGSSVVFPLDFV). Over 45 to 75 (KTRLQQQRVSIDGSKQYNGIIDCFKKVIKNE) the chain is Mitochondrial matrix. The helical transmembrane segment at 76–97 (GGVRGLYRGLSSNLIGIIPEKA) threads the bilayer. The Mitochondrial intermembrane portion of the chain corresponds to 98–122 (LKLAMNDYFRTRFQGDRSYIKLWEE). The helical transmembrane segment at 123–143 (VASGGLAGMCQVVATNPMELV) threads the bilayer. Over 144 to 173 (KIRMQVSGLSGKKASLKEVVSELGIKGLYK) the chain is Mitochondrial matrix. A helical transmembrane segment spans residues 174 to 194 (GTASTLLRDVPFSMIYFSIYG). At 195-207 (RMKHNLTDQETGE) the chain is on the mitochondrial intermembrane side. Residues 208–228 (IGLPKILLCGITAGSIAASVS) traverse the membrane as a helical segment. The Mitochondrial matrix portion of the chain corresponds to 229-271 (TPFDVIKTRIQVKPGPNDPHYKGIADCFRKTIQSEGPKALFKG). Residues 272 to 292 (VLPRVCIISPLFGITLVVYEI) form a helical membrane-spanning segment. Topologically, residues 293–301 (QKSFYASTH) are mitochondrial intermembrane.

The protein belongs to the mitochondrial carrier (TC 2.A.29) family.

It localises to the mitochondrion inner membrane. Its function is as follows. Mitochondrial solute carriers shuttle metabolites, nucleotides, and cofactors through the mitochondrial inner membrane. The polypeptide is Mitochondrial substrate carrier family protein X (mcfX) (Dictyostelium discoideum (Social amoeba)).